The primary structure comprises 155 residues: Ribosome maturation factor RimP (155 aa).

It belongs to the RimP family.

The protein resides in the cytoplasm. Required for maturation of 30S ribosomal subunits. The protein is Ribosome maturation factor RimP of Staphylococcus carnosus (strain TM300).